A 140-amino-acid polypeptide reads, in one-letter code: Nucleoside diphosphate kinase (140 aa).

6 residues coordinate ATP: lysine 11, phenylalanine 59, arginine 87, threonine 93, arginine 104, and asparagine 114. Histidine 117 acts as the Pros-phosphohistidine intermediate in catalysis.

The protein belongs to the NDK family. Homotetramer. It depends on Mg(2+) as a cofactor.

It localises to the cytoplasm. The catalysed reaction is a 2'-deoxyribonucleoside 5'-diphosphate + ATP = a 2'-deoxyribonucleoside 5'-triphosphate + ADP. It carries out the reaction a ribonucleoside 5'-diphosphate + ATP = a ribonucleoside 5'-triphosphate + ADP. Its function is as follows. Major role in the synthesis of nucleoside triphosphates other than ATP. The ATP gamma phosphate is transferred to the NDP beta phosphate via a ping-pong mechanism, using a phosphorylated active-site intermediate. The polypeptide is Nucleoside diphosphate kinase (Persephonella marina (strain DSM 14350 / EX-H1)).